The following is a 304-amino-acid chain: Nucleotide-binding protein ROP_69550 (304 aa).

24–31 (GLSGAGLQ) is a binding site for ATP. Position 75-78 (75-78 (DVRS)) interacts with GTP.

Belongs to the RapZ-like family.

Its function is as follows. Displays ATPase and GTPase activities. The sequence is that of Nucleotide-binding protein ROP_69550 from Rhodococcus opacus (strain B4).